The sequence spans 476 residues: Sulfate adenylyltransferase subunit 1 (476 aa).

The tr-type G domain occupies Lys-24–Leu-228. The tract at residues Gly-33–Ser-40 is G1. Residue Gly-33 to Ser-40 participates in GTP binding. Positions Gly-91 to Asp-95 are G2. Residues Asp-112–Gly-115 are G3. GTP is bound by residues Asp-112 to His-116 and Asn-167 to Asp-170. Residues Asn-167–Asp-170 form a G4 region. Residues Ser-205–Leu-207 form a G5 region.

It belongs to the TRAFAC class translation factor GTPase superfamily. Classic translation factor GTPase family. CysN/NodQ subfamily. Heterodimer composed of CysD, the smaller subunit, and CysN.

It carries out the reaction sulfate + ATP + H(+) = adenosine 5'-phosphosulfate + diphosphate. It participates in sulfur metabolism; hydrogen sulfide biosynthesis; sulfite from sulfate: step 1/3. Functionally, with CysD forms the ATP sulfurylase (ATPS) that catalyzes the adenylation of sulfate producing adenosine 5'-phosphosulfate (APS) and diphosphate, the first enzymatic step in sulfur assimilation pathway. APS synthesis involves the formation of a high-energy phosphoric-sulfuric acid anhydride bond driven by GTP hydrolysis by CysN coupled to ATP hydrolysis by CysD. This Vibrio vulnificus (strain CMCP6) protein is Sulfate adenylyltransferase subunit 1.